The sequence spans 358 residues: Phenylalanine--tRNA ligase alpha subunit (358 aa).

Glutamate 279 contributes to the Mg(2+) binding site.

Belongs to the class-II aminoacyl-tRNA synthetase family. Phe-tRNA synthetase alpha subunit type 1 subfamily. Tetramer of two alpha and two beta subunits. It depends on Mg(2+) as a cofactor.

The protein resides in the cytoplasm. The catalysed reaction is tRNA(Phe) + L-phenylalanine + ATP = L-phenylalanyl-tRNA(Phe) + AMP + diphosphate + H(+). This is Phenylalanine--tRNA ligase alpha subunit from Variovorax paradoxus (strain S110).